The following is a 147-amino-acid chain: Lysozyme C, tracheal isozyme (147 aa).

The signal sequence occupies residues 1 to 18 (MKALLILGLLLLSVAVQG). Positions 19–147 (KTFKRCELAK…LTSYVKGCGV (129 aa)) constitute a C-type lysozyme domain. 4 disulfide bridges follow: C24–C145, C48–C133, C83–C99, and C95–C113. Active-site residues include E53 and D71.

This sequence belongs to the glycosyl hydrolase 22 family. As to quaternary structure, monomer. In terms of tissue distribution, trachea.

The catalysed reaction is Hydrolysis of (1-&gt;4)-beta-linkages between N-acetylmuramic acid and N-acetyl-D-glucosamine residues in a peptidoglycan and between N-acetyl-D-glucosamine residues in chitodextrins.. Its function is as follows. Lysozymes have primarily a bacteriolytic function; those in tissues and body fluids are associated with the monocyte-macrophage system and enhance the activity of immunoagents. This Bos taurus (Bovine) protein is Lysozyme C, tracheal isozyme.